Consider the following 813-residue polypeptide: MKAFPKNYNFTENEKKWQRIWQEKQIYAYDPNISKEETYIVDTPPPTVSGQLHIGHVYSYTQTDFIVRFQRMIGKNIFYPMGFDDNGLPTERLVEKQKQIKAYNIGRNKFIQICEEVVASEEEKFRGLLNKIALSVDWSLEYQTISPLSQKISQMSFLDLVKRGEIYRNDQPILWDPVDGTALAQADIKDTENSSLMNYITFKTEQGEPLTIATTRPELLPACVAVFYHPDDRHYKHLAGKFVITPLFKDKVPLLADPLVQQDKGTGLVMCCTFGDQTDITWWKTHNLPLKTIITKKGTIDFPNDIGIDRLKIKEARAKIIDILKEQNLLIKQEEITHIVKCAERSGSPLEILTMPQWFVKTISHKEALLKRANELNWHPKNMKIRLENWINAISWDWCISRQRCFGVPFPVWYSKRVGEEGKILYADIAQLPVDPLRDLPIGYSRDEVEPDLDVMDTWATSSVSPQLSTHGISDDFAINKNRHDKLFPMDLRPQAHEIIRTWAFYTILKAHLHQNTLPWKNIMVSGWCLAEDRSKMSKSKGNVLVPEKLLEQYGSDVIRYWSANSKLGADTAYSEDVMKNGKRLVNKLWNAAKFVSIHLHKLKDQDKKAKLLEVKEIITNEFDKWMINKLVELVNAVTNELQNYEYANAMHLTEKFFLAVFCDNYLEISKTRAYDEDNKNLSGQYSSILTLYHVMQTLLKLFAPFMPHITEELYQILYNDKESIHIKGTFANHDNLHYNIDTKQAEGMLKILDIVRKFKAEKNLSIKAPIKLLKISGIVLSEELAEDLKNVTSAEEIKFEIQDNKIKIDIII.

Residues 46–56 (PTVSGQLHIGH) carry the 'HIGH' region motif. A 'KMSKS' region motif is present at residues 536–540 (KMSKS). Lys539 contacts ATP.

The protein belongs to the class-I aminoacyl-tRNA synthetase family. ValS type 2 subfamily. In terms of assembly, monomer.

The protein localises to the cytoplasm. The catalysed reaction is tRNA(Val) + L-valine + ATP = L-valyl-tRNA(Val) + AMP + diphosphate. In terms of biological role, catalyzes the attachment of valine to tRNA(Val). As ValRS can inadvertently accommodate and process structurally similar amino acids such as threonine, to avoid such errors, it has a 'posttransfer' editing activity that hydrolyzes mischarged Thr-tRNA(Val) in a tRNA-dependent manner. This is Valine--tRNA ligase from Rickettsia canadensis (strain McKiel).